Reading from the N-terminus, the 353-residue chain is UPF0283 membrane protein YcjF (353 aa).

Helical transmembrane passes span 70-90 (MVMG…VQWT), 100-120 (VALG…GSVV), and 213-233 (ESTL…FIAW).

This sequence belongs to the UPF0283 family.

It localises to the cell inner membrane. The chain is UPF0283 membrane protein YcjF from Shigella boydii serotype 4 (strain Sb227).